A 477-amino-acid chain; its full sequence is Mannitol 2-dehydrogenase (477 aa).

Residue 19-30 (IVHIGVGNFHRA) participates in NAD(+) binding.

Belongs to the mannitol dehydrogenase family. Monomer.

The enzyme catalyses D-mannitol + NAD(+) = D-fructose + NADH + H(+). This is Mannitol 2-dehydrogenase (mtlK) from Cereibacter sphaeroides (Rhodobacter sphaeroides).